Consider the following 123-residue polypeptide: Large ribosomal subunit protein uL14 (123 aa).

Belongs to the universal ribosomal protein uL14 family. Part of the 50S ribosomal subunit. Forms a cluster with proteins L3 and L19. In the 70S ribosome, L14 and L19 interact and together make contacts with the 16S rRNA in bridges B5 and B8.

Functionally, binds to 23S rRNA. Forms part of two intersubunit bridges in the 70S ribosome. This is Large ribosomal subunit protein uL14 from Escherichia coli O6:K15:H31 (strain 536 / UPEC).